Reading from the N-terminus, the 568-residue chain is AT-rich interactive domain-containing protein 3B (568 aa).

M1 is subject to N-acetylmethionine. Over residues 1–22 (MEPLQQQQQQQQQKQPQQPLLQ) the composition is skewed to low complexity. Residues 1-174 (MEPLQQQQQQ…SVPTAGQPSW (174 aa)) are disordered. S87 is subject to Phosphoserine. Positions 88-107 (EPEEEEGGLEDEDGDDDVAE) are enriched in acidic residues. Residues 151–160 (TKEDHTKDAS) show a composition bias toward basic and acidic residues. The interval 201 to 374 (SRDFAKLYEL…SSPKIRFSIL (174 aa)) is interaction with RB1. The 93-residue stretch at 213–305 (DPERKEFLDD…YLYAYECEKK (93 aa)) folds into the ARID domain. S309 carries the post-translational modification Phosphoserine. R370 carries the asymmetric dimethylarginine modification. The tract at residues 378–403 (SSSGTSASSPRIPPASTLRKGDGVPV) is disordered. Positions 425–522 (GPLEHLRERL…GVLFAQKPVV (98 aa)) constitute an REKLES domain. The interaction with ARID3A stretch occupies residues 495–518 (SNIGSINMSVDIDGTTYTGVLFAQ). Positions 529-559 (TPQSIGSSASSSNSSSSHCSPSPTSSRGTPS) are enriched in low complexity. A disordered region spans residues 529–568 (TPQSIGSSASSSNSSSSHCSPSPTSSRGTPSAEPSTSWSL).

In terms of assembly, heterodimer with ARID3A. Interacts with unphosphorylated RB1. In terms of tissue distribution, expressed at high levels in testis. Also expressed in prostate, thyroid and thymus.

The protein localises to the nucleus. Its function is as follows. Transcription factor involved in the production of cranial mesenchymal tissues. Favors nuclear targeting of ARID3A. In Mus musculus (Mouse), this protein is AT-rich interactive domain-containing protein 3B (Arid3b).